The following is a 131-amino-acid chain: Large ribosomal subunit protein bL17 (131 aa).

Belongs to the bacterial ribosomal protein bL17 family. As to quaternary structure, part of the 50S ribosomal subunit. Contacts protein L32.

This Thermotoga sp. (strain RQ2) protein is Large ribosomal subunit protein bL17.